A 49-amino-acid polypeptide reads, in one-letter code: Large ribosomal subunit protein bL33 (49 aa).

This sequence belongs to the bacterial ribosomal protein bL33 family.

The sequence is that of Large ribosomal subunit protein bL33 from Syntrophus aciditrophicus (strain SB).